The chain runs to 261 residues: MDGKLRADEVAVTKSIIKSSFEMWMDLIEVDVVIVGGGPSGLTAAKYLAEKGVKTLVLERHLSFGGGTWGGGMGFPNIVVEKPADEILRSAGIKLKSVDGEPELFTADSVEVPAKLGVAAIDAGAKILTGIVVEDLILKEDKISGVVIQSYSIEKAGLHVDPITISAKYVIDSTGHDASVVSTLARKNKDLGIEVPGEKSMWAEKGENSLTRNTREIFPGLFVCGMTANAYHAGYRMGAIFGGMYLSGKKCAELILEKLNK.

Residues S40, 59 to 60 (ER), G67, V133, and 159 to 161 (HVD) each bind NAD(+). Residues D161 and H176 each coordinate Fe cation. Residues S179 and M226 each contribute to the NAD(+) site. R236 is a binding site for glycine.

It belongs to the THI4 family. Homooctamer; tetramer of dimers. The cofactor is Fe(2+).

The enzyme catalyses hydrogen sulfide + glycine + NAD(+) = ADP-5-ethyl-4-methylthiazole-2-carboxylate + nicotinamide + 3 H2O + H(+). Its pathway is cofactor biosynthesis; thiamine diphosphate biosynthesis. In terms of biological role, involved in the biosynthesis of the thiazole moiety of thiamine. Catalyzes the conversion of NAD and glycine to adenosine diphosphate 5-(2-hydroxyethyl)-4-methylthiazole-2-carboxylate (ADT), an adenylated thiazole intermediate, using free sulfide as a source of sulfur. This is Thiamine thiazole synthase from Methanococcus vannielii (strain ATCC 35089 / DSM 1224 / JCM 13029 / OCM 148 / SB).